A 129-amino-acid chain; its full sequence is Small ribosomal subunit protein uS8 (129 aa).

This sequence belongs to the universal ribosomal protein uS8 family. Part of the 30S ribosomal subunit. Contacts proteins S5 and S12.

In terms of biological role, one of the primary rRNA binding proteins, it binds directly to 16S rRNA central domain where it helps coordinate assembly of the platform of the 30S subunit. This is Small ribosomal subunit protein uS8 from Legionella pneumophila (strain Corby).